Reading from the N-terminus, the 144-residue chain is Transcriptional regulator SlyA (144 aa).

In terms of domain architecture, HTH marR-type spans 2 to 135 (ESPLGSDLAR…LITLIAKLEH (134 aa)). The segment at residues 49-72 (QIQLAKAIGIEQPSLVRTLDQLEE) is a DNA-binding region (H-T-H motif).

The protein belongs to the SlyA family. Homodimer.

Functionally, transcription regulator that can specifically activate or repress expression of target genes. The protein is Transcriptional regulator SlyA of Escherichia coli (strain 55989 / EAEC).